We begin with the raw amino-acid sequence, 183 residues long: Helofensin-2 (183 aa).

Positions 1-26 (MQMDWLFIAVISGIGLLSSGVPGTQG) are cleaved as a signal peptide. A C(6)C(4)C(9)C(6)CC 1; approximate repeat occupies 27 to 64 (AYTTEQCRALNGSCNFYACFPKNVIIGKCDWWGWSCCA). Residues 65 to 101 (RTPLERCTAKKGTCTKTGCTKTDTDHGPCDGGAQCCQ) form a C(6)C(4)C(9)C(6)CC 2; approximate repeat. Residues 102-139 (RDPVKYCKFHGNVCGRGKCPMDHIPIGEQCMPGYPCCK) form a C(6)C(4)C(9)C(6)CC 3; approximate repeat. Residues 140 to 177 (RDGPAYCKSKGGKCLRRCSQIVPTDIIGVCADGVPCCK) form a C(6)C(4)C(9)C(6)CC 4; approximate repeat.

The protein belongs to the beta-defensin family. Helofensin subfamily. Expressed by the mandibular venom gland.

Its subcellular location is the secreted. Lethal toxin which possesses an inhibitory effect on direct electrical stimulation of the isolated hemi-diaphragm of mice. Neither hemorrhagic nor hemolytic activities are detected. Phospholipase A2 activity, proteolytic activity and arginine esterolytic activity are absent. This chain is Helofensin-2, found in Heloderma suspectum cinctum (Banded Gila monster).